A 1050-amino-acid polypeptide reads, in one-letter code: Toll-like receptor 7 (1050 aa).

Residues 1–26 (MVFSMWTRKRQILIFLNMLLVSRVFG) form the signal peptide. Residues 27–837 (FRWFPKTLPC…SLDLYTCELD (811 aa)) lie on the Extracellular side of the membrane. LRR repeat units follow at residues 42–64 (IPEA…EGIP), 65–87 (TNTT…SFRR), 89–111 (NHLE…KANV), 126–149 (LSDL…LPSS), 151–170 (HLLS…NLTE), 171–195 (LVNI…SYSI), 203–226 (MRNL…LPPN), 228–247 (LELY…DFNN), 248–273 (LNEL…CTPC), 275–289 (NNSP…FNSL), 290–312 (TELK…WFKN), 314–337 (RNLQ…KFLH), 339–364 (LPNL…TLPH), 369–392 (LENL…SLSV), 396–419 (LPRL…IFKH), 421–443 (ENLK…REVG), 493–516 (HIYG…DFQH), 517–542 (LSFL…LWPL), 543–565 (RELR…AFEE), and 567–589 (QSLE…ITHM). 2 N-linked (GlcNAc...) asparagine glycosylation sites follow: Asn66 and Asn69. Asn167, Asn190, and Asn215 each carry an N-linked (GlcNAc...) asparagine glycan. N-linked (GlcNAc...) asparagine glycosylation occurs at Asn387. 2 N-linked (GlcNAc...) asparagine glycosylation sites follow: Asn524 and Asn535. N-linked (GlcNAc...) asparagine glycosylation occurs at Asn591. 8 LRR repeats span residues 596 to 619 (LRLL…TMES), 620 to 645 (DSLR…RYLD), 650 to 673 (LFNL…VFEG), 675 to 698 (PPNL…RLQL), 699 to 722 (LKHL…LANC), 724 to 746 (KSLT…FLED), 747 to 770 (ALQL…SFPE), and 773 to 796 (LNNL…VWFV). N-linked (GlcNAc...) asparagine glycans are attached at residues Asn680 and Asn721. Residue Asn800 is glycosylated (N-linked (GlcNAc...) asparagine). A helical transmembrane segment spans residues 838 to 858 (LTNLILFSVSISSVLFLMVVM). At 859–1050 (TTSHLFFWDM…AYSQMFKETV (192 aa)) the chain is on the cytoplasmic side. A TIR domain is found at 890–1034 (SCYDAFIVYD…YFWQCLKNAL (145 aa)).

It belongs to the Toll-like receptor family. Homodimer. Interacts with MYD88 via their respective TIR domains. Interacts with UNC93B1. Interacts with SMPDL3B. Post-translationally, the first cleavage is performed by asparagine endopeptidase or cathepsin family members. This initial cleavage event is followed by a trimming event that is solely cathepsin mediated and required for optimal receptor signaling.

The protein localises to the endosome membrane. It localises to the endoplasmic reticulum membrane. Its subcellular location is the lysosome. It is found in the cytoplasmic vesicle. The protein resides in the phagosome. Its activity is regulated as follows. Activated by guanosine analogs including deoxyguanosine, 7-thia-8-oxoguanosine or 7-deazaguanosine in a RNA-independent manner. Its function is as follows. Endosomal receptor that plays a key role in innate and adaptive immunity. Controls host immune response against pathogens through recognition of uridine-containing single strand RNAs (ssRNAs) of viral origin or guanosine analogs. Upon binding to agonists, undergoes dimerization that brings TIR domains from the two molecules into direct contact, leading to the recruitment of TIR-containing downstream adapter MYD88 through homotypic interaction. In turn, the Myddosome signaling complex is formed involving IRAK4, IRAK1, TRAF6, TRAF3 leading to activation of downstream transcription factors NF-kappa-B and IRF7 to induce pro-inflammatory cytokines and interferons, respectively. In plasmacytoid dendritic cells, RNASET2 endonuclease cooperates with PLD3 or PLD4 5'-&gt;3' exonucleases to process RNA and release 2',3'-cyclic guanosine monophosphate (2',3'-cGMP) and cytidine-rich RNA fragments that occupy TLR7 ligand-binding pockets and trigger a signaling-competent state. The chain is Toll-like receptor 7 (Tlr7) from Mus musculus (Mouse).